Reading from the N-terminus, the 229-residue chain is Large ribosomal subunit protein uL1 (229 aa).

The protein belongs to the universal ribosomal protein uL1 family. Part of the 50S ribosomal subunit.

Its function is as follows. Binds directly to 23S rRNA. The L1 stalk is quite mobile in the ribosome, and is involved in E site tRNA release. Functionally, protein L1 is also a translational repressor protein, it controls the translation of the L11 operon by binding to its mRNA. The protein is Large ribosomal subunit protein uL1 of Magnetococcus marinus (strain ATCC BAA-1437 / JCM 17883 / MC-1).